Consider the following 580-residue polypeptide: Arginine--tRNA ligase (580 aa).

Positions 131-141 (ANPTGPLHVGH) match the 'HIGH' region motif.

This sequence belongs to the class-I aminoacyl-tRNA synthetase family. As to quaternary structure, monomer.

The protein resides in the cytoplasm. The catalysed reaction is tRNA(Arg) + L-arginine + ATP = L-arginyl-tRNA(Arg) + AMP + diphosphate. In Ruegeria sp. (strain TM1040) (Silicibacter sp.), this protein is Arginine--tRNA ligase.